The primary structure comprises 1407 residues: DNA-directed RNA polymerase subunit beta' (1407 aa).

Zn(2+) is bound by residues C70, C72, C85, and C88. The Mg(2+) site is built by D460, D462, and D464. Zn(2+)-binding residues include C814, C888, C895, and C898. K972 is subject to N6-acetyllysine.

It belongs to the RNA polymerase beta' chain family. As to quaternary structure, the RNAP catalytic core consists of 2 alpha, 1 beta, 1 beta' and 1 omega subunit. When a sigma factor is associated with the core the holoenzyme is formed, which can initiate transcription. The cofactor is Mg(2+). Zn(2+) serves as cofactor.

The catalysed reaction is RNA(n) + a ribonucleoside 5'-triphosphate = RNA(n+1) + diphosphate. Functionally, DNA-dependent RNA polymerase catalyzes the transcription of DNA into RNA using the four ribonucleoside triphosphates as substrates. The chain is DNA-directed RNA polymerase subunit beta' from Shigella sonnei (strain Ss046).